Consider the following 322-residue polypeptide: Nodulation protein D 1 (322 aa).

An HTH lysR-type domain is found at 6–63 (LDLNLLVALDALMTERKLTAAARSINLSQPAMSAAITRLRTYFRDELFTMNGRELVPT). The segment at residues 23 to 42 (LTAAARSINLSQPAMSAAIT) is a DNA-binding region (H-T-H motif).

The protein belongs to the LysR transcriptional regulatory family.

Its function is as follows. Regulates the expression of the nod abcFE genes which encode other nodulation proteins. NodD is also a negative regulator of its own expression. Binds flavonoids as inducers. The sequence is that of Nodulation protein D 1 (nodD1) from Sinorhizobium fredii (strain NBRC 101917 / NGR234).